Here is a 297-residue protein sequence, read N- to C-terminus: Heterogeneous nuclear ribonucleoprotein D-like (297 aa).

The segment at 1–21 (MTGFGATPDFNEGSKINASKN) is disordered. 2 RRM domains span residues 26 to 108 (GKMF…KGKE) and 111 to 190 (KKVF…QPKE). Positions 192-224 (YRQQQQKQQKGGRGAATGRGGARGRGRGQGWNQ) are disordered. The span at 202-222 (GGRGAATGRGGARGRGRGQGW) shows a compositional bias: gly residues.

It is found in the nucleus. The protein localises to the cytoplasm. Functionally, acts as a transcriptional regulator. Binds DNA and RNA. In Xenopus tropicalis (Western clawed frog), this protein is Heterogeneous nuclear ribonucleoprotein D-like (hnrnpdl).